The following is a 246-amino-acid chain: Probable septum site-determining protein MinC (246 aa).

The segment at 116-140 (AAVSPPPPPPARAEPAPPAARPAPG) is disordered. Pro residues predominate over residues 119–136 (SPPPPPPARAEPAPPAAR).

It belongs to the MinC family. As to quaternary structure, interacts with MinD and FtsZ.

Functionally, cell division inhibitor that blocks the formation of polar Z ring septums. Rapidly oscillates between the poles of the cell to destabilize FtsZ filaments that have formed before they mature into polar Z rings. Prevents FtsZ polymerization. This is Probable septum site-determining protein MinC from Xanthomonas oryzae pv. oryzae (strain MAFF 311018).